A 306-amino-acid polypeptide reads, in one-letter code: Pseudouridine-5'-phosphate glycosidase (306 aa).

Glutamate 27 functions as the Proton donor in the catalytic mechanism. Substrate-binding residues include lysine 88 and valine 108. Residue aspartate 140 participates in Mn(2+) binding. 142-144 (SAD) is a binding site for substrate. Residue lysine 161 is the Nucleophile of the active site.

Belongs to the pseudouridine-5'-phosphate glycosidase family. As to quaternary structure, homotrimer. The cofactor is Mn(2+).

It carries out the reaction D-ribose 5-phosphate + uracil = psi-UMP + H2O. Functionally, catalyzes the reversible cleavage of pseudouridine 5'-phosphate (PsiMP) to ribose 5-phosphate and uracil. Functions biologically in the cleavage direction, as part of a pseudouridine degradation pathway. In Petrotoga mobilis (strain DSM 10674 / SJ95), this protein is Pseudouridine-5'-phosphate glycosidase.